The sequence spans 118 residues: Large ribosomal subunit protein uL18 (118 aa).

This sequence belongs to the universal ribosomal protein uL18 family. As to quaternary structure, part of the 50S ribosomal subunit; part of the 5S rRNA/L5/L18/L25 subcomplex. Contacts the 5S and 23S rRNAs.

This is one of the proteins that bind and probably mediate the attachment of the 5S RNA into the large ribosomal subunit, where it forms part of the central protuberance. The polypeptide is Large ribosomal subunit protein uL18 (Campylobacter jejuni subsp. jejuni serotype O:2 (strain ATCC 700819 / NCTC 11168)).